The following is a 312-amino-acid chain: Methionyl-tRNA formyltransferase (312 aa).

109–112 (SLLP) is a (6S)-5,6,7,8-tetrahydrofolate binding site.

Belongs to the Fmt family.

It catalyses the reaction L-methionyl-tRNA(fMet) + (6R)-10-formyltetrahydrofolate = N-formyl-L-methionyl-tRNA(fMet) + (6S)-5,6,7,8-tetrahydrofolate + H(+). In terms of biological role, attaches a formyl group to the free amino group of methionyl-tRNA(fMet). The formyl group appears to play a dual role in the initiator identity of N-formylmethionyl-tRNA by promoting its recognition by IF2 and preventing the misappropriation of this tRNA by the elongation apparatus. The sequence is that of Methionyl-tRNA formyltransferase from Caulobacter sp. (strain K31).